Here is a 633-residue protein sequence, read N- to C-terminus: Probable potassium transport system protein Kup 3 (633 aa).

A run of 12 helical transmembrane segments spans residues 24-44, 61-81, 114-134, 148-168, 180-200, 222-242, 258-278, 298-318, 348-368, 377-397, 405-425, and 427-447; these read LVLA…LYAF, VLGI…LKYV, LVLG…TPAI, PALS…LFFV, FGPV…IHIF, IGSA…AEAL, WFSL…AFVL, IPMV…VISG, IFMP…VLFF, AYGI…FIVM, LTAA…FLAA, and IAKF…MALI.

Belongs to the HAK/KUP transporter (TC 2.A.72) family.

The protein localises to the cell inner membrane. The enzyme catalyses K(+)(in) + H(+)(in) = K(+)(out) + H(+)(out). Functionally, transport of potassium into the cell. Likely operates as a K(+):H(+) symporter. The polypeptide is Probable potassium transport system protein Kup 3 (Rhizobium johnstonii (strain DSM 114642 / LMG 32736 / 3841) (Rhizobium leguminosarum bv. viciae)).